Reading from the N-terminus, the 507-residue chain is MENDPFLRQYQPSELKIASEFLTNWLPFLSKDLCKDCNHLLSNRIRSLDPAHCSNNTDKVDGECKTGSCSVVENMGSERASNNVDDNYDEKSENGEDCDNHSLGSWKGSEIVFGSFPEDFSSVLQSRPAVVETASPRMRWADMAQEDEFDEEEEEEEEERDSSRKGFDASSMKTPEKPKLSRDQRENLRLINVKRKKDFICLERVKGKIVNVLDGLELHTGVFSAVEQKRIVDQVYQLQEKGRRGELKKRTFTAPHKWMRGKGRETIQFGCCYNYAPDRAGNPPGILQREEVDPLPHLFKVIIRKLIKWHVLPPTCVPDSCIVNIYDEGDCIPPHIDNHDFLRPFCTISFLSECDILFGSNLKVEGPGDFSGSYSIPLPVGSVLVLNGNGADVAKHCVPAVPTKRISITFRKMDESKRPVWFTPEPDLQGIEPLPLDLNRSGSTSRFSRLNNHNGTNQRGHGRRGGGNGYDSRGYYNPERSSEHNDSGDWPSSQRRGMPRPSRRNYG.

2 disordered regions span residues 76-102 (GSER…DNHS) and 145-183 (QEDE…LSRD). The segment covering 89–100 (DEKSENGEDCDN) has biased composition (basic and acidic residues). The span at 145-160 (QEDEFDEEEEEEEEER) shows a compositional bias: acidic residues. A compositionally biased stretch (basic and acidic residues) spans 174–183 (TPEKPKLSRD). One can recognise a Fe2OG dioxygenase domain in the interval 317–414 (VPDSCIVNIY…RISITFRKMD (98 aa)). Residues His-335, Asp-337, and His-396 each contribute to the Fe cation site. A 2-oxoglutarate-binding site is contributed by Arg-405. Positions 432–507 (EPLPLDLNRS…MPRPSRRNYG (76 aa)) are disordered. A compositionally biased stretch (polar residues) spans 440-450 (RSGSTSRFSRL). Residues 497-507 (GMPRPSRRNYG) show a composition bias toward basic residues.

It belongs to the alkB family. As to quaternary structure, (Microbial infection) Interacts with the capsid protein ORF3b of the alfalfa mosaic virus (AMV). Fe(2+) serves as cofactor.

The protein localises to the cytoplasm. It localises to the P-body. It is found in the cytoplasmic granule. It carries out the reaction an N(6)-methyladenosine in mRNA + 2-oxoglutarate + O2 = an adenosine in mRNA + formaldehyde + succinate + CO2. Functionally, dioxygenase that demethylates RNA by oxidative demethylation: specifically demethylates N(6)-methyladenosine (m6A) RNA, the most prevalent internal modification of messenger RNA (mRNA) in higher eukaryotes. Modulates viral infection of the alfalfa mosaic virus (AMV) and the m6A abundance in its genomic RNAs. The sequence is that of RNA demethylase ALKBH9B from Arabidopsis thaliana (Mouse-ear cress).